A 225-amino-acid chain; its full sequence is Small ribosomal subunit protein uS5 (225 aa).

The region spanning 57–120 (LEEQVLDVKL…AHAKLSLIKV (64 aa)) is the S5 DRBM domain.

The protein belongs to the universal ribosomal protein uS5 family. In terms of assembly, part of the 30S ribosomal subunit. Contacts protein S4.

Its function is as follows. With S4 and S12 plays an important role in translational accuracy. This is Small ribosomal subunit protein uS5 from Methanococcus maripaludis (strain DSM 14266 / JCM 13030 / NBRC 101832 / S2 / LL).